The chain runs to 160 residues: MPQITLVFISLSGNTLSFVKRLSLYLADNYDYHVKQINIKDLKHETFPVKEEFVAILPTYLEGGNGVDSGEVEILTTPLGEFIAAHGNAQRCLGIIGSGNKNFNHQYCLTAKQYAKRFGFPLLGDFELRGTPDDISRLAQLIMEASSRHSSNDTQTLPNS.

It belongs to the NrdI family.

The sequence is that of Putative NrdI-like protein from Streptococcus pyogenes serotype M6 (strain ATCC BAA-946 / MGAS10394).